The primary structure comprises 675 residues: PTS system glucose-specific EIICBA component (675 aa).

The PTS EIIC type-1 domain maps to 3–414 (KKLFGQMQRI…FNYKTPGRED (412 aa)). The next 11 membrane-spanning stretches (helical) occupy residues 16–36 (LMLP…GTAF), 59–79 (MLTG…ALGV), 81–101 (IGLA…FIIL), 126–146 (VLGI…GALA), 170–190 (FVPI…AIIW), 211–231 (LAVF…LHHI), 273–293 (FMQG…LAIY), 303–323 (VVAG…ITEP), 328–348 (FLFV…LSFL), 355–375 (VHLG…GILP), and 378–398 (TAWW…YFVF). The PTS EIIB type-1 domain occupies 425–506 (SQLPFDVLKA…AKIISGEITK (82 aa)). The active-site Phosphocysteine intermediate; for EIIB activity is cysteine 447. The region spanning 547–651 (DKVFSEKMMG…SIITPVIITN (105 aa)) is the PTS EIIA type-1 domain. The Tele-phosphohistidine intermediate; for EIIA activity role is filled by histidine 599.

The protein resides in the cell membrane. The catalysed reaction is N(pros)-phospho-L-histidyl-[protein] + D-glucose(out) = D-glucose 6-phosphate(in) + L-histidyl-[protein]. The phosphoenolpyruvate-dependent sugar phosphotransferase system (sugar PTS), a major carbohydrate active transport system, catalyzes the phosphorylation of incoming sugar substrates concomitantly with their translocation across the cell membrane. This system is involved in glucose transport. This Staphylococcus epidermidis protein is PTS system glucose-specific EIICBA component (ptsG).